The sequence spans 303 residues: Coenzyme PQQ synthesis protein B (303 aa).

The protein belongs to the PqqB family.

It participates in cofactor biosynthesis; pyrroloquinoline quinone biosynthesis. In terms of biological role, may be involved in the transport of PQQ or its precursor to the periplasm. The sequence is that of Coenzyme PQQ synthesis protein B from Rhizobium meliloti (strain 1021) (Ensifer meliloti).